The sequence spans 88 residues: Large ribosomal subunit protein bL27 (88 aa).

The segment covering 1 to 13 (MATKKGASSSSNG) has biased composition (polar residues). The interval 1 to 23 (MATKKGASSSSNGRDSEAKRLGV) is disordered.

The protein belongs to the bacterial ribosomal protein bL27 family.

The polypeptide is Large ribosomal subunit protein bL27 (Corynebacterium urealyticum (strain ATCC 43042 / DSM 7109)).